The sequence spans 307 residues: Agmatinase (307 aa).

The Mn(2+) site is built by His-126, Asp-149, His-151, Asp-153, Asp-230, and Asp-232.

This sequence belongs to the arginase family. Agmatinase subfamily. Requires Mn(2+) as cofactor.

The enzyme catalyses agmatine + H2O = urea + putrescine. The protein operates within amine and polyamine biosynthesis; putrescine biosynthesis via agmatine pathway; putrescine from agmatine: step 1/1. Functionally, catalyzes the formation of putrescine from agmatine. The protein is Agmatinase of Sodalis glossinidius (strain morsitans).